Reading from the N-terminus, the 123-residue chain is Large ribosomal subunit protein bL12 (123 aa).

Belongs to the bacterial ribosomal protein bL12 family. As to quaternary structure, homodimer. Part of the ribosomal stalk of the 50S ribosomal subunit. Forms a multimeric L10(L12)X complex, where L10 forms an elongated spine to which 2 to 4 L12 dimers bind in a sequential fashion. Binds GTP-bound translation factors.

Its function is as follows. Forms part of the ribosomal stalk which helps the ribosome interact with GTP-bound translation factors. Is thus essential for accurate translation. In Chromobacterium violaceum (strain ATCC 12472 / DSM 30191 / JCM 1249 / CCUG 213 / NBRC 12614 / NCIMB 9131 / NCTC 9757 / MK), this protein is Large ribosomal subunit protein bL12.